Consider the following 308-residue polypeptide: Ribosomal RNA small subunit methyltransferase H (308 aa).

S-adenosyl-L-methionine-binding positions include 32–34 (GGH), Asp52, Phe78, Asp100, and Gln107.

Belongs to the methyltransferase superfamily. RsmH family.

The protein localises to the cytoplasm. The enzyme catalyses cytidine(1402) in 16S rRNA + S-adenosyl-L-methionine = N(4)-methylcytidine(1402) in 16S rRNA + S-adenosyl-L-homocysteine + H(+). Specifically methylates the N4 position of cytidine in position 1402 (C1402) of 16S rRNA. This Legionella pneumophila (strain Corby) protein is Ribosomal RNA small subunit methyltransferase H.